We begin with the raw amino-acid sequence, 353 residues long: UPF0283 membrane protein Spro_2618 (353 aa).

The next 3 membrane-spanning stretches (helical) occupy residues 71-91 (MVTA…VQWV), 101-121 (IAMG…GSVV), and 214-234 (ESTL…FIAW).

This sequence belongs to the UPF0283 family.

It is found in the cell inner membrane. This chain is UPF0283 membrane protein Spro_2618, found in Serratia proteamaculans (strain 568).